Consider the following 33-residue polypeptide: Omega-conotoxin-like Vn2 (33 aa).

3 cysteine pairs are disulfide-bonded: cysteine 3-cysteine 20, cysteine 10-cysteine 24, and cysteine 19-cysteine 28. Proline 33 carries the post-translational modification Proline amide.

In terms of tissue distribution, expressed by the venom duct.

It is found in the secreted. Functionally, omega-conotoxins act at presynaptic membranes, they bind and block voltage-gated calcium channels (Cav). Has strong insecticidal properties at a dose of only 100 pmol/g of body weight (when injected into the haemocoel of the wax moth G.mellonella larvae). Provoques tremor and uncontrolled movements in insect larvae, that are typical symptoms caused by neurotoxins. On fish G.niger, intraperitoneal injection of the toxin causes full extension of the fins, change in posture, breathing difficulties (at 30 and 100 pmol/g body weight) and death (at 100 pmol/g body weight). This chain is Omega-conotoxin-like Vn2, found in Conus ventricosus (Mediterranean cone).